Consider the following 470-residue polypeptide: Uronate isomerase (470 aa).

The protein belongs to the metallo-dependent hydrolases superfamily. Uronate isomerase family.

The enzyme catalyses D-glucuronate = D-fructuronate. It carries out the reaction aldehydo-D-galacturonate = keto-D-tagaturonate. It functions in the pathway carbohydrate metabolism; pentose and glucuronate interconversion. The sequence is that of Uronate isomerase from Escherichia coli O17:K52:H18 (strain UMN026 / ExPEC).